The following is a 301-amino-acid chain: 4-hydroxy-tetrahydrodipicolinate synthase (301 aa).

Thr-46 is a binding site for pyruvate. The active-site Proton donor/acceptor is the Tyr-134. The active-site Schiff-base intermediate with substrate is the Lys-162. A pyruvate-binding site is contributed by Ile-203.

It belongs to the DapA family. Homotetramer; dimer of dimers.

The protein localises to the cytoplasm. It catalyses the reaction L-aspartate 4-semialdehyde + pyruvate = (2S,4S)-4-hydroxy-2,3,4,5-tetrahydrodipicolinate + H2O + H(+). Its pathway is amino-acid biosynthesis; L-lysine biosynthesis via DAP pathway; (S)-tetrahydrodipicolinate from L-aspartate: step 3/4. Catalyzes the condensation of (S)-aspartate-beta-semialdehyde [(S)-ASA] and pyruvate to 4-hydroxy-tetrahydrodipicolinate (HTPA). In Anaplasma marginale (strain Florida), this protein is 4-hydroxy-tetrahydrodipicolinate synthase.